The chain runs to 624 residues: Protein FAM234B (624 aa).

Residues 1–91 (MATVLSRALK…GFPSEPLGGL (91 aa)) form a disordered region. Ser-16 carries the post-translational modification Phosphoserine. Phosphothreonine is present on Thr-26. Residues Ser-30, Ser-33, and Ser-63 each carry the phosphoserine modification. The helical transmembrane segment at 107-127 (VFLLTLVISMVLVLLCAFLIP) threads the bilayer.

The protein belongs to the FAM234 family.

It localises to the membrane. The protein resides in the golgi outpost. The protein localises to the cytoplasm. It is found in the cytoskeleton. Its subcellular location is the microtubule organizing center. In Mus musculus (Mouse), this protein is Protein FAM234B.